A 476-amino-acid polypeptide reads, in one-letter code: NAC domain-containing protein 86 (476 aa).

An NAC domain is found at 6 to 157 (LPPGFRFHPT…AYALCRVFKK (152 aa)). A DNA-binding region spans residues 105-163 (IGTKKTLVYYRGRAPHGIRTGWVMHEYRLDESECEPSAFGMQDAYALCRVFKKIVIEAK).

As to expression, expressed in a few sieve element cells before enucleation and in phloem-pole pericycle cells.

Its subcellular location is the nucleus. Functionally, transcription factor directing sieve element enucleation and cytosol degradation. Not required for formation of lytic vacuoles. Regulates, with NAC045, the transcription of NEN1, NEN2, NEN3, NEN4, RTM1, RTM2, UBP16, PLDZETA, ABCB10 and At1g26450. The chain is NAC domain-containing protein 86 from Arabidopsis thaliana (Mouse-ear cress).